We begin with the raw amino-acid sequence, 206 residues long: Large ribosomal subunit protein uL4 (206 aa).

This sequence belongs to the universal ribosomal protein uL4 family. As to quaternary structure, part of the 50S ribosomal subunit.

One of the primary rRNA binding proteins, this protein initially binds near the 5'-end of the 23S rRNA. It is important during the early stages of 50S assembly. It makes multiple contacts with different domains of the 23S rRNA in the assembled 50S subunit and ribosome. In terms of biological role, forms part of the polypeptide exit tunnel. This chain is Large ribosomal subunit protein uL4, found in Paracoccus denitrificans (strain Pd 1222).